The following is a 519-amino-acid chain: Methionine--tRNA ligase (519 aa).

Positions 11-21 match the 'HIGH' region motif; sequence AYPNAAPHVGH. Positions 299 to 303 match the 'KMSKS' region motif; sequence KMSKS. Lys-302 is an ATP binding site. The tract at residues 500–519 is disordered; it reads LPPPTGVFPRYQPPQPPEGK.

The protein belongs to the class-I aminoacyl-tRNA synthetase family. MetG type 2B subfamily. In terms of assembly, monomer.

The protein localises to the cytoplasm. The catalysed reaction is tRNA(Met) + L-methionine + ATP = L-methionyl-tRNA(Met) + AMP + diphosphate. Is required not only for elongation of protein synthesis but also for the initiation of all mRNA translation through initiator tRNA(fMet) aminoacylation. The chain is Methionine--tRNA ligase (metG) from Mycobacterium tuberculosis (strain CDC 1551 / Oshkosh).